The sequence spans 143 residues: 16 kDa calcium-binding protein (143 aa).

EF-hand domains are found at residues 2-37, 41-71, 73-108, and 109-143; these read SEEK…VGVC, ADKI…LPPR, KCVA…SGMD, and IDQN…QTYK. Asp15, Asp17, Asn19, Glu26, Asp49, Asn51, Asp53, Lys55, Glu60, Asp86, Asp88, Ser90, Lys92, Glu97, Asp122, Asn124, Asp126, Glu128, and Glu133 together coordinate Ca(2+).

Found in eggs.

Its function is as follows. Calcium-binding protein. This is 16 kDa calcium-binding protein from Schistosoma mansoni (Blood fluke).